Here is a 63-residue protein sequence, read N- to C-terminus: uncharacterized protein (63 aa).

The chain crosses the membrane as a helical span at residues 20-40 (IVLLISFIFFFGRFIYSSVGA).

Its subcellular location is the membrane. This is an uncharacterized protein from Escherichia coli O157:H7.